We begin with the raw amino-acid sequence, 314 residues long: tRNA dimethylallyltransferase (314 aa).

Residue 12-19 (GPTASGKT) coordinates ATP. Residue 14-19 (TASGKT) participates in substrate binding. Interaction with substrate tRNA regions lie at residues 37-40 (DSAL) and 162-166 (QRIIR).

The protein belongs to the IPP transferase family. Monomer. It depends on Mg(2+) as a cofactor.

The catalysed reaction is adenosine(37) in tRNA + dimethylallyl diphosphate = N(6)-dimethylallyladenosine(37) in tRNA + diphosphate. Catalyzes the transfer of a dimethylallyl group onto the adenine at position 37 in tRNAs that read codons beginning with uridine, leading to the formation of N6-(dimethylallyl)adenosine (i(6)A). This is tRNA dimethylallyltransferase from Acinetobacter baumannii (strain SDF).